We begin with the raw amino-acid sequence, 310 residues long: Ribosomal RNA small subunit methyltransferase H (310 aa).

Residues 32 to 34 (AGH), Asp-52, Phe-79, Asp-100, and Gln-107 each bind S-adenosyl-L-methionine.

Belongs to the methyltransferase superfamily. RsmH family.

It localises to the cytoplasm. It catalyses the reaction cytidine(1402) in 16S rRNA + S-adenosyl-L-methionine = N(4)-methylcytidine(1402) in 16S rRNA + S-adenosyl-L-homocysteine + H(+). In terms of biological role, specifically methylates the N4 position of cytidine in position 1402 (C1402) of 16S rRNA. In Halalkalibacterium halodurans (strain ATCC BAA-125 / DSM 18197 / FERM 7344 / JCM 9153 / C-125) (Bacillus halodurans), this protein is Ribosomal RNA small subunit methyltransferase H.